Consider the following 912-residue polypeptide: Protein translocase subunit SecA (912 aa).

ATP contacts are provided by residues Gln-87, 105-109, and Asp-508; that span reads GEGKT. Residues 865 to 912 form a disordered region; that stretch reads DEEAAQVQSGNAPVPVSQVTRDEPKVGRNDPCPCGSGKKYKHCHGQLS. 4 residues coordinate Zn(2+): Cys-896, Cys-898, Cys-907, and His-908. Over residues 902–912 the composition is skewed to basic residues; the sequence is KKYKHCHGQLS.

This sequence belongs to the SecA family. In terms of assembly, monomer and homodimer. Part of the essential Sec protein translocation apparatus which comprises SecA, SecYEG and auxiliary proteins SecDF-YajC and YidC. Zn(2+) serves as cofactor.

Its subcellular location is the cell inner membrane. The protein localises to the cytoplasm. The enzyme catalyses ATP + H2O + cellular proteinSide 1 = ADP + phosphate + cellular proteinSide 2.. In terms of biological role, part of the Sec protein translocase complex. Interacts with the SecYEG preprotein conducting channel. Has a central role in coupling the hydrolysis of ATP to the transfer of proteins into and across the cell membrane, serving both as a receptor for the preprotein-SecB complex and as an ATP-driven molecular motor driving the stepwise translocation of polypeptide chains across the membrane. This Xanthomonas oryzae pv. oryzae (strain MAFF 311018) protein is Protein translocase subunit SecA.